The sequence spans 216 residues: Probable succinyl-CoA:3-ketoacid coenzyme A transferase subunit B (216 aa).

E47 is a catalytic residue.

Belongs to the 3-oxoacid CoA-transferase subunit B family. As to quaternary structure, heterodimer of a subunit A and a subunit B.

It catalyses the reaction a 3-oxo acid + succinyl-CoA = a 3-oxoacyl-CoA + succinate. The polypeptide is Probable succinyl-CoA:3-ketoacid coenzyme A transferase subunit B (scoB) (Bacillus subtilis (strain 168)).